A 478-amino-acid polypeptide reads, in one-letter code: Proline--tRNA ligase (478 aa).

The protein belongs to the class-II aminoacyl-tRNA synthetase family. ProS type 3 subfamily. Homodimer.

It localises to the cytoplasm. It carries out the reaction tRNA(Pro) + L-proline + ATP = L-prolyl-tRNA(Pro) + AMP + diphosphate. Catalyzes the attachment of proline to tRNA(Pro) in a two-step reaction: proline is first activated by ATP to form Pro-AMP and then transferred to the acceptor end of tRNA(Pro). This Ruminiclostridium cellulolyticum (strain ATCC 35319 / DSM 5812 / JCM 6584 / H10) (Clostridium cellulolyticum) protein is Proline--tRNA ligase.